A 380-amino-acid chain; its full sequence is GDP-mannose:cellobiosyl-diphosphopolyprenol alpha-mannosyltransferase (380 aa).

It belongs to the glycosyltransferase group 1 family. Glycosyltransferase 4 subfamily.

The catalysed reaction is beta-D-Glc-(1-&gt;4)-alpha-D-Glc-di-trans,octa-cis-undecaprenyl diphosphate + GDP-alpha-D-mannose = alpha-D-Man-(1-&gt;3)-beta-D-Glc-(1-&gt;4)-alpha-D-Glc-1-di-trans,octa-cis-undecaprenyl diphosphate + GDP + H(+). Its function is as follows. Involved in the biosynthesis of the exopolysaccharide xanthan, a polymer that is comprised of repeating pentasaccharide units with the structure of a beta-(1,4)-linked D-glucose backbone with trisaccharide side chains composed of mannose-beta-(1,4)-glucuronic acid-beta-(1,2)-mannose attached to alternate glucose residues in the backbone by alpha-(1,3) linkages. Xanthan is involved in pathogenicity but has also been used in a variety of applications as a specialty polymer for commercial applications, including food additives, where they act as viscosifying, stabilizing, emulsifying, or gelling agents. This chain is GDP-mannose:cellobiosyl-diphosphopolyprenol alpha-mannosyltransferase (gumH), found in Xanthomonas oryzae pv. oryzae (strain PXO99A).